Here is a 160-residue protein sequence, read N- to C-terminus: tRNA (cytidine(34)-2'-O)-methyltransferase (160 aa).

The S-adenosyl-L-methionine site is built by Leu78, Gly100, Ile122, and Ser130.

It belongs to the class IV-like SAM-binding methyltransferase superfamily. RNA methyltransferase TrmH family. TrmL subfamily. Homodimer.

Its subcellular location is the cytoplasm. It catalyses the reaction cytidine(34) in tRNA + S-adenosyl-L-methionine = 2'-O-methylcytidine(34) in tRNA + S-adenosyl-L-homocysteine + H(+). The enzyme catalyses 5-carboxymethylaminomethyluridine(34) in tRNA(Leu) + S-adenosyl-L-methionine = 5-carboxymethylaminomethyl-2'-O-methyluridine(34) in tRNA(Leu) + S-adenosyl-L-homocysteine + H(+). Methylates the ribose at the nucleotide 34 wobble position in the two leucyl isoacceptors tRNA(Leu)(CmAA) and tRNA(Leu)(cmnm5UmAA). Catalyzes the methyl transfer from S-adenosyl-L-methionine to the 2'-OH of the wobble nucleotide. The protein is tRNA (cytidine(34)-2'-O)-methyltransferase of Haemophilus influenzae (strain ATCC 51907 / DSM 11121 / KW20 / Rd).